Reading from the N-terminus, the 741-residue chain is uncharacterized protein (741 aa).

The first 22 residues, 1–22, serve as a signal peptide directing secretion; it reads MKSVKIIIILALALLIQISHIA.

This is an uncharacterized protein from Archaeoglobus fulgidus (strain ATCC 49558 / DSM 4304 / JCM 9628 / NBRC 100126 / VC-16).